The sequence spans 273 residues: LOB domain-containing protein 20 (273 aa).

The span at 1–15 (MADQQRGHNTSDSRR) shows a compositional bias: basic and acidic residues. The disordered stretch occupies residues 1–39 (MADQQRGHNTSDSRRKSLAGKRTSQQTPTSSLSSGGVSM). Residues 23–39 (TSQQTPTSSLSSGGVSM) show a composition bias toward low complexity. The region spanning 50 to 152 (SPCGACKFLR…AELSVVQSQL (103 aa)) is the LOB domain. The tract at residues 221–248 (LEHSLQPMPPHQQRRGDYQHEDEEESGA) is disordered.

The protein belongs to the LOB domain-containing protein family. As to expression, expressed in roots and flowers.

This chain is LOB domain-containing protein 20 (LBD20), found in Arabidopsis thaliana (Mouse-ear cress).